A 219-amino-acid chain; its full sequence is MAYPGKKSKSYETPRHPWQEARMAAEVQLVKAYGLRNKKEVWKAASMLRMYRSEARKLLAQVASGGQEGELEGHYATQSEEILSKLIRYGIIKADANVDDILSLKTENILERRLQTQVLRLGLARTVIQARQFITHGHIAINGRKATIPGMLVSKEDEMHIGYYGSSPLMSESHSERPVQVASFLADSATTLKAAAEAKQARERPPERGGGRKKRGGRR.

An S4 RNA-binding domain is found at Arg112–His174. The interval Lys193 to Arg219 is disordered. A compositionally biased stretch (basic and acidic residues) spans Lys199–Gly210.

Belongs to the universal ribosomal protein uS4 family. As to quaternary structure, part of the 30S ribosomal subunit. Contacts protein S5. The interaction surface between S4 and S5 is involved in control of translational fidelity.

Its function is as follows. One of the primary rRNA binding proteins, it binds directly to 16S rRNA where it nucleates assembly of the body of the 30S subunit. With S5 and S12 plays an important role in translational accuracy. The chain is Small ribosomal subunit protein uS4 from Methanosarcina mazei (strain ATCC BAA-159 / DSM 3647 / Goe1 / Go1 / JCM 11833 / OCM 88) (Methanosarcina frisia).